Consider the following 254-residue polypeptide: Proteasome subunit alpha type-4 (254 aa).

Phosphothreonine is present on T60. The segment at 235–254 (QIEQEKQEQQEQDKKKKSNH) is disordered. Positions 237–248 (EQEKQEQQEQDK) are enriched in basic and acidic residues.

This sequence belongs to the peptidase T1A family. In terms of assembly, the 26S proteasome consists of a 20S proteasome core and two 19S regulatory subunits. The 20S proteasome core is composed of 28 subunits that are arranged in four stacked rings, resulting in a barrel-shaped structure. The two end rings are each formed by seven alpha subunits, and the two central rings are each formed by seven beta subunits. The catalytic chamber with the active sites is on the inside of the barrel. Interacts with CIC1.

It is found in the cytoplasm. The protein resides in the nucleus. The proteasome degrades poly-ubiquitinated proteins in the cytoplasm and in the nucleus. It is essential for the regulated turnover of proteins and for the removal of misfolded proteins. The proteasome is a multicatalytic proteinase complex that is characterized by its ability to cleave peptides with Arg, Phe, Tyr, Leu, and Glu adjacent to the leaving group at neutral or slightly basic pH. It has an ATP-dependent proteolytic activity. In Saccharomyces cerevisiae (strain ATCC 204508 / S288c) (Baker's yeast), this protein is Proteasome subunit alpha type-4 (PRE6).